The sequence spans 484 residues: Glutamate--tRNA ligase (484 aa).

The 'HIGH' region signature appears at 11–21; sequence PSPTGLLHIGN. A 'KMSKS' region motif is present at residues 255 to 259; the sequence is KLSKR. Lys-258 provides a ligand contact to ATP.

This sequence belongs to the class-I aminoacyl-tRNA synthetase family. Glutamate--tRNA ligase type 1 subfamily. Monomer.

The protein resides in the cytoplasm. It carries out the reaction tRNA(Glu) + L-glutamate + ATP = L-glutamyl-tRNA(Glu) + AMP + diphosphate. Its function is as follows. Catalyzes the attachment of glutamate to tRNA(Glu) in a two-step reaction: glutamate is first activated by ATP to form Glu-AMP and then transferred to the acceptor end of tRNA(Glu). The polypeptide is Glutamate--tRNA ligase (Streptococcus agalactiae serotype V (strain ATCC BAA-611 / 2603 V/R)).